The chain runs to 1027 residues: Sodium/potassium-transporting ATPase subunit alpha-1 (1027 aa).

The propeptide occupies 1-5; sequence MGVGD. The span at 1–10 shows a compositional bias: basic and acidic residues; the sequence is MGVGDGRDQY. The disordered stretch occupies residues 1–39; sequence MGVGDGRDQYELAAMSEQSGKKKSKNKKEKKEKDMDELK. Residues 6–90 lie on the Cytoplasmic side of the membrane; that stretch reads GRDQYELAAM…NALTPPPTTP (85 aa). The residue at position 16 (Ser-16) is a Phosphoserine; by PKC. Basic and acidic residues predominate over residues 29-39; it reads EKKEKDMDELK. The segment at 85 to 87 is interaction with phosphoinositide-3 kinase; the sequence is PPP. A helical membrane pass occupies residues 91–111; it reads EWVKFCKQMFGGFSMLLWTGA. Residues 112–134 lie on the Extracellular side of the membrane; sequence VLCFLAYGILAAMEDEPANDNLY. A helical membrane pass occupies residues 135 to 155; that stretch reads LGVVLSAVVIITGCFSYYQDA. Residues 156 to 291 are Cytoplasmic-facing; that stretch reads KSSKIMDSFK…VGRTPISIEI (136 aa). Positions 217–238 are disordered; the sequence is DNSSLTGESEPQTRSPDFSNDN. Residues 292–311 traverse the membrane as a helical segment; that stretch reads EHFIHIITGVAVFLGVSFLL. Topologically, residues 312-323 are extracellular; it reads LSLVLGYSWLEA. The helical transmembrane segment at 324-341 threads the bilayer; that stretch reads VIFLIGIIVANVPEGLLA. Residues 342–776 lie on the Cytoplasmic side of the membrane; it reads TVTVCLTLTA…EEGRLIFDNL (435 aa). Catalysis depends on Asp-379, which acts as the 4-aspartylphosphate intermediate. ATP is bound at residue Lys-490. Residues Asp-721 and Asp-725 each coordinate Mg(2+). A helical membrane pass occupies residues 777–796; that stretch reads KKSIAYTLTSNIPEITPFLF. The Extracellular portion of the chain corresponds to 797 to 806; the sequence is FIIANIPLPL. A helical transmembrane segment spans residues 807–827; that stretch reads GTVTILCIDLGTDMLPAISLA. Residues 828–847 lie on the Cytoplasmic side of the membrane; sequence YEAAESDIMKRQPRNPKTDK. Residues 848–870 form a helical membrane-spanning segment; sequence LVNERLISIAYGQIGMIQALAGF. The Extracellular portion of the chain corresponds to 871–922; the sequence is FTYFVILAENGFLPPRLLGIRMNWDDKYINDLEDSYGQQWTYEQRKIVEFTC. Residues 923 to 942 traverse the membrane as a helical segment; it reads HTAFFTSIVIVQWADLIICK. At 943-955 the chain is on the cytoplasmic side; sequence TRRNSVFQQGMKN. Ser-947 is subject to Phosphoserine; by PKA. A helical membrane pass occupies residues 956–974; that stretch reads KILIFGLFEETALAAFLSY. Residues 975-989 lie on the Extracellular side of the membrane; it reads CPGMDVALRMYPLKP. Residues 990–1010 form a helical membrane-spanning segment; it reads NWWFCAFPYSLLIFIYDEIRK. Over 1011–1027 the chain is Cytoplasmic; the sequence is LILRRNPGGWMERETYY.

This sequence belongs to the cation transport ATPase (P-type) (TC 3.A.3) family. Type IIC subfamily. In terms of assembly, the sodium/potassium-transporting ATPase is composed of a catalytic alpha subunit, an auxiliary non-catalytic beta subunit and an additional regulatory subunit.

The protein localises to the cell membrane. The protein resides in the sarcolemma. The catalysed reaction is K(+)(out) + Na(+)(in) + ATP + H2O = K(+)(in) + Na(+)(out) + ADP + phosphate + H(+). Functionally, this is the catalytic component of the active enzyme, which catalyzes the hydrolysis of ATP coupled with the exchange of sodium and potassium ions across the plasma membrane. This action creates the electrochemical gradient of sodium and potassium ions, providing the energy for active transport of various nutrients. In Catostomus commersonii (White sucker), this protein is Sodium/potassium-transporting ATPase subunit alpha-1 (atp1a1).